A 1411-amino-acid chain; its full sequence is MPTSKLQANMSYREVIPRNLSPAEWIEVKINTGTQSTLQDLKTFETSGGYCYKNTKNVQTRNRFIYWRTYQDVLELSEVSLDISLQRNHLRLRFTDSAVLNVSLTEQGTSVTLLVVTVSSVHRYVFPLKVAGQEGGAASPEDLLSQSIFYDVNDKINDPSTYYVTDGFGTMPNAAVSYLTQDSQSAYFAVAYQSKLLLHVMKCSTGHTITHEIKEPKLMPWFLSNLKGALTGRSETLEAATSMAFSEIGGEIFILVLYRNNELRLWSVDNLQTVASINCSTELGQDSAAQGPQNSQLRKISDQNFCLFLSHNSRAEFICVSIMPDADDASVINLVQNMVPAPQTDLVDFDATSSHIWALWSNAEGDFHVSAAYFASNNAIKWVSAALEPPPDRYCLTMEQGVDPRETYCSYIFHPGRFDRNVIAKALYMFRRVNLQFDVKQLSMSVLKEQVCQAVEDEIQNELKDFVVTDEEYLEISTRLWDRFYSCCEQYHIKLSEPTGLAVLGGMDAVCLVRRQSFALLRPCEVLEHLLLIGEHNDEVATYVAPLFRNDPEMAKGFVELMNVVTLLDKLISEDIKIELDKQLYQRESPVEVISKLVARISMIDDNGPILPSNCVRQIQQKLQNIPNLEPALEMLLDVLCMIDPDEPPHDYSLSTRFLQSSGALMGSEYGLSILSETVKQMAMIRFSVCRNLLVLQYMAYGQNEMESENVLTNLNYLNSYYTLVWIAETPISSSTPAGFEASIQRLSRAQLFSGYNRPYSSHLKHNGNDQTTLLRLFLESKGLFSALTMLLKHDSLSLDSEQLNLRQSLLQLVGYINKMLWPGSPIYVFPEWLFGTCHHIIVQDYVRILSNWCSVQKHARRFMLAVSLLDCGEAHKAVHLFHEAESGIVEDDFLFEHVLKNTPLYGKLQNSVSRGDTISPEDTKLAIVHYYLKVIQLFEQHSALDYIIQLADMAIRVLQPDDPQLPMFQSIVFNNHLQLGHYVEAYTALVNNADISRRKDCLRQLVITLFQNKCLPLLMQFSYIGLQDEFESIVESRARSMSIDQNEVYNFLYAFHTNKGNMRKASTVMYEQAMRFQVDSDAPNALEKRCSSLLICLNCLHLVDSRYRWIAKPVLGDEQVITIDQDNDDGEPKCDEDKRGQEVVVLELADIRRELVHAEALRELSFYRKDTAAYERATPEELSYLLASSGLYTAALKLSRGHSFSVLPIFESLTSACVAATEDKSSDAWNWLQNNDMADLPHRSNAADMAWTLLQKLVVDNEAKDSTLIRKSVVQRLLGLNAFLPQWLINSYKLSHSRELLHLLVKHNRLLEAADLGCEIIAGMLGAGSEYFEFKHAVNIANPQLCFPISTIDLLLHGLKINGKDDLDYEMAYFKLEEEVQRYIETIKRTTDDKMSMAVLQMRTDLQEER.

In terms of assembly, part of the nuclear pore complex. Interacts with Nup98.

The protein resides in the nucleus. The protein localises to the nuclear pore complex. Functions as a component of the nuclear pore complex (NPC). Involved in poly(A)+ RNA transport. Required for nuclear import of Mad. May play a role in double strand break DNA repair. Essential for nephrocyte development. This is Nuclear pore complex protein Nup160 homolog (Nup160) from Drosophila melanogaster (Fruit fly).